The primary structure comprises 267 residues: 3-methyl-2-oxobutanoate hydroxymethyltransferase (267 aa).

Mg(2+) contacts are provided by Asp45 and Asp84. Residues 45–46 (DS), Asp84, and Lys113 each bind 3-methyl-2-oxobutanoate. Glu115 provides a ligand contact to Mg(2+). The Proton acceptor role is filled by Glu182.

It belongs to the PanB family. Homodecamer; pentamer of dimers. Mg(2+) is required as a cofactor.

The protein localises to the cytoplasm. The catalysed reaction is 3-methyl-2-oxobutanoate + (6R)-5,10-methylene-5,6,7,8-tetrahydrofolate + H2O = 2-dehydropantoate + (6S)-5,6,7,8-tetrahydrofolate. The protein operates within cofactor biosynthesis; coenzyme A biosynthesis. In terms of biological role, catalyzes the reversible reaction in which hydroxymethyl group from 5,10-methylenetetrahydrofolate is transferred onto alpha-ketoisovalerate to form ketopantoate. This Sulfurisphaera tokodaii (strain DSM 16993 / JCM 10545 / NBRC 100140 / 7) (Sulfolobus tokodaii) protein is 3-methyl-2-oxobutanoate hydroxymethyltransferase.